Reading from the N-terminus, the 665-residue chain is DNA ligase (665 aa).

Residues 31–35 (DKEFD), 80–81 (SL), and Glu-110 each bind NAD(+). The active-site N6-AMP-lysine intermediate is Lys-112. Positions 133, 170, 285, and 309 each coordinate NAD(+). The Zn(2+) site is built by Cys-403, Cys-406, Cys-421, and Cys-427. One can recognise a BRCT domain in the interval 587 to 665 (GHTDKLAGQS…NEEEFLKLIS (79 aa)).

The protein belongs to the NAD-dependent DNA ligase family. LigA subfamily. Requires Mg(2+) as cofactor. Mn(2+) is required as a cofactor.

The catalysed reaction is NAD(+) + (deoxyribonucleotide)n-3'-hydroxyl + 5'-phospho-(deoxyribonucleotide)m = (deoxyribonucleotide)n+m + AMP + beta-nicotinamide D-nucleotide.. In terms of biological role, DNA ligase that catalyzes the formation of phosphodiester linkages between 5'-phosphoryl and 3'-hydroxyl groups in double-stranded DNA using NAD as a coenzyme and as the energy source for the reaction. It is essential for DNA replication and repair of damaged DNA. The protein is DNA ligase of Bacteroides fragilis (strain ATCC 25285 / DSM 2151 / CCUG 4856 / JCM 11019 / LMG 10263 / NCTC 9343 / Onslow / VPI 2553 / EN-2).